A 497-amino-acid chain; its full sequence is MSSLPWLTIIVLLPICAGLLIPLFPNEGNKIIRWYTLGICIIEFLLITYIFCCHFRINDQSLQLEEDYNWIDLINFHWRLGIDGLSMGLILLTGFVTTLATLAAWPVTRNTRLFHFLMLAMYSGQIGLFASQDILLFFFMWELELIPIYLLLSIWGGKRRLYSATKFILYTAGGSIFLLIGALTIGLYGNNGPLFDIQSLATRSYPIALEIIIYSGFLIAYAVKLPIFPFHTWLPDTHGEAHYSTCMLLAGILLKMGGYGLIRINMELLPHAHAIFAPWMVMFGAVQIVYASLISLNQRNLKRRIAYSSVSHMGFVMIGIGSLTNIGLNGAILQMISHGLTGAALFFLAGTSYDRTRTLFLDQLGGIAISMPKLFTMFSIFSLASLALPGMSGFVAELMVFLGIVISQNYSLTFKIVITIIEAIGIILTPIYLLSMLRQMFYGYKIPNTLALSLIDSGPREIFISLCLLLPIIGIGLYPNLVLSLWNSEVEYILSQY.

Helical transmembrane passes span 4-24, 35-55, 87-107, 113-133, 134-154, 167-187, 207-227, 242-262, 274-294, 313-333, 386-406, 416-436, and 462-482; these read LPWLTIIVLLPICAGLLIPLF, YTLGICIIEFLLITYIFCCHF, MGLILLTGFVTTLATLAAWPV, LFHFLMLAMYSGQIGLFASQD, ILLFFFMWELELIPIYLLLSI, FILYTAGGSIFLLIGALTIGL, IALEIIIYSGFLIAYAVKLPI, HYSTCMLLAGILLKMGGYGLI, AIFAPWMVMFGAVQIVYASLI, MGFVMIGIGSLTNIGLNGAIL, LALPGMSGFVAELMVFLGIVI, IVITIIEAIGIILTPIYLLSM, and IFISLCLLLPIIGIGLYPNLV.

It belongs to the complex I subunit 4 family.

The protein localises to the plastid. It localises to the chloroplast thylakoid membrane. The catalysed reaction is a plastoquinone + NADH + (n+1) H(+)(in) = a plastoquinol + NAD(+) + n H(+)(out). The enzyme catalyses a plastoquinone + NADPH + (n+1) H(+)(in) = a plastoquinol + NADP(+) + n H(+)(out). This Angiopteris evecta (Mule's foot fern) protein is NAD(P)H-quinone oxidoreductase chain 4, chloroplastic.